A 354-amino-acid chain; its full sequence is DNA polymerase IV (354 aa).

The UmuC domain occupies 8 to 189 (IIHVDMDCFY…LPLEKIPGVG (182 aa)). Positions 12 and 107 each coordinate Mg(2+). The active site involves Glu-108.

It belongs to the DNA polymerase type-Y family. In terms of assembly, monomer. Mg(2+) serves as cofactor.

The protein resides in the cytoplasm. The catalysed reaction is DNA(n) + a 2'-deoxyribonucleoside 5'-triphosphate = DNA(n+1) + diphosphate. Poorly processive, error-prone DNA polymerase involved in untargeted mutagenesis. Copies undamaged DNA at stalled replication forks, which arise in vivo from mismatched or misaligned primer ends. These misaligned primers can be extended by PolIV. Exhibits no 3'-5' exonuclease (proofreading) activity. May be involved in translesional synthesis, in conjunction with the beta clamp from PolIII. This is DNA polymerase IV from Vibrio parahaemolyticus serotype O3:K6 (strain RIMD 2210633).